A 369-amino-acid chain; its full sequence is Anhydro-N-acetylmuramic acid kinase (369 aa).

12–19 (GTSLDGVD) lines the ATP pocket.

The protein belongs to the anhydro-N-acetylmuramic acid kinase family.

It catalyses the reaction 1,6-anhydro-N-acetyl-beta-muramate + ATP + H2O = N-acetyl-D-muramate 6-phosphate + ADP + H(+). The protein operates within amino-sugar metabolism; 1,6-anhydro-N-acetylmuramate degradation. It functions in the pathway cell wall biogenesis; peptidoglycan recycling. Catalyzes the specific phosphorylation of 1,6-anhydro-N-acetylmuramic acid (anhMurNAc) with the simultaneous cleavage of the 1,6-anhydro ring, generating MurNAc-6-P. Is required for the utilization of anhMurNAc either imported from the medium or derived from its own cell wall murein, and thus plays a role in cell wall recycling. This Escherichia coli (strain SE11) protein is Anhydro-N-acetylmuramic acid kinase.